Consider the following 217-residue polypeptide: Adenylate kinase (217 aa).

ATP is bound at residue 10–15 (GAGKGT). Residues 30–59 (STGDMLRAAVKAESELGLQVKEVMASGGLV) form an NMP region. AMP is bound by residues Thr-31, Arg-36, 57-59 (GLV), 85-88 (GFPR), and Gln-92. Positions 122–159 (GRRVHEGSGRIYHVKYDPPKVEGKDDETGEALIQREDD) are LID. Residues Arg-123 and 132–133 (IY) each bind ATP. Residues Arg-156 and Arg-167 each coordinate AMP. Gly-203 contacts ATP.

The protein belongs to the adenylate kinase family. As to quaternary structure, monomer.

The protein resides in the cytoplasm. It carries out the reaction AMP + ATP = 2 ADP. Its pathway is purine metabolism; AMP biosynthesis via salvage pathway; AMP from ADP: step 1/1. Functionally, catalyzes the reversible transfer of the terminal phosphate group between ATP and AMP. Plays an important role in cellular energy homeostasis and in adenine nucleotide metabolism. In Marinobacter nauticus (strain ATCC 700491 / DSM 11845 / VT8) (Marinobacter aquaeolei), this protein is Adenylate kinase.